Reading from the N-terminus, the 588-residue chain is Sperm-associated microtubule inner protein 4 (588 aa).

Thr-219 is modified (phosphothreonine). Phosphoserine occurs at positions 224, 406, 421, 427, and 437. Tyr-441 bears the Phosphotyrosine mark. Phosphoserine is present on residues Ser-457 and Ser-484. Thr-512 is modified (phosphothreonine). A Phosphoserine modification is found at Ser-516. Residue Lys-543 forms a Glycyl lysine isopeptide (Lys-Gly) (interchain with G-Cter in SUMO2) linkage. The residue at position 545 (Ser-545) is a Phosphoserine.

The protein resides in the cytoplasm. It is found in the cytoskeleton. Its subcellular location is the microtubule organizing center. It localises to the centrosome. The protein localises to the flagellum axoneme. Its function is as follows. Microtubule inner protein (MIP) part of the dynein-decorated doublet microtubules (DMTs) in flagellum axoneme. May serve to reinforce and thus stabilize the microtubule structure in the sperm flagella. In Rattus norvegicus (Rat), this protein is Sperm-associated microtubule inner protein 4 (Spmip4).